The sequence spans 183 residues: Adenine phosphoribosyltransferase (183 aa).

This sequence belongs to the purine/pyrimidine phosphoribosyltransferase family. As to quaternary structure, homodimer.

The protein localises to the cytoplasm. The catalysed reaction is AMP + diphosphate = 5-phospho-alpha-D-ribose 1-diphosphate + adenine. Its pathway is purine metabolism; AMP biosynthesis via salvage pathway; AMP from adenine: step 1/1. Its function is as follows. Catalyzes a salvage reaction resulting in the formation of AMP, that is energically less costly than de novo synthesis. The chain is Adenine phosphoribosyltransferase from Escherichia coli (strain K12 / MC4100 / BW2952).